Consider the following 710-residue polypeptide: Choline transporter-like protein 2 (710 aa).

Over 1-34 (MEDDGKSPPDSAYGEPKKYDPNFKGPIQNRGCTD) the chain is Cytoplasmic. A helical transmembrane segment spans residues 35 to 55 (ILCCILIVLGIIAYVAVGIVA). The Extracellular segment spans residues 56 to 236 (WTYGDPRKVI…KIFEDYTVSW (181 aa)). Asn147, Asn190, and Asn204 each carry an N-linked (GlcNAc...) asparagine glycan. A helical membrane pass occupies residues 237–257 (YWIIIGLIIAMVISLIFVVLL). The Cytoplasmic portion of the chain corresponds to 258–260 (RFL). The helical transmembrane segment at 261 to 281 (AGIMVWVMIVLVIAVMGYGIF) threads the bilayer. The Extracellular segment spans residues 282–319 (HCYMEYARLKGQSGSDVTLKDIGFQTDIRVYLHLRQTW). The chain crosses the membrane as a helical span at residues 320–340 (LAFMIILCILEVIVILLLIFL). Residues 341-368 (RKRIMIAIALIKEASRAVGFVMSSLVFP) lie on the Cytoplasmic side of the membrane. Residues 369–389 (LFTFLLVCLCIAYWAITAVFL) form a helical membrane-spanning segment. At 390–458 (STSNEAVYKV…FQIYNAFMFL (69 aa)) the chain is on the extracellular side. 3 N-linked (GlcNAc...) asparagine glycosylation sites follow: Asn401, Asn418, and Asn421. Residues 459–481 (WLANFVIALGQVTLAGAFASYYW) traverse the membrane as a helical segment. Residues 482–508 (AFKKPDDMPAFPIFSSLGRALRYHTGS) lie on the Cytoplasmic side of the membrane. Residues 509-529 (LAFGSLILAIVQMIRILLEYL) traverse the membrane as a helical segment. Over 530 to 567 (DHKLKGADNKCARFLLCCLKCCFWCLEKFIKFLNRNAY) the chain is Extracellular. The helical transmembrane segment at 568 to 588 (IMIAIYGTNFCTSARNAFFLL) threads the bilayer. Topologically, residues 589–603 (MRNIIRVAVLDKVTD) are cytoplasmic. Residues 604–624 (FLLFLGKLLVVGCVGILAFFF) form a helical membrane-spanning segment. Residues 625–642 (FSRRIQIVQDTAPTLNYY) lie on the Extracellular side of the membrane. Residues 643–663 (WVPILTVILGSYLIAHGFFSV) traverse the membrane as a helical segment. Topologically, residues 664-710 (YGMCVDTLFLCFLEDLERNDGSTERPYFMSGSLQKLLNKSNQTKPDK) are cytoplasmic.

Belongs to the CTL (choline transporter-like) family.

It is found in the cell membrane. Its subcellular location is the mitochondrion outer membrane. It carries out the reaction choline(out) + n H(+)(in) = choline(in) + n H(+)(out). The catalysed reaction is ethanolamine(out) + n H(+)(in) = ethanolamine(in) + n H(+)(out). Choline/H+ antiporter, mainly in mitochodria. Also acts as a low-affinity ethanolamine/H+ antiporter, regulating the supply of extracellular ethanolamine (Etn) for the CDP-Etn pathway, redistribute intracellular Etn and balance the CDP-Cho and CDP-Etn arms of the Kennedy pathway. The chain is Choline transporter-like protein 2 (slc44a2) from Xenopus laevis (African clawed frog).